The sequence spans 430 residues: Serine hydroxymethyltransferase (430 aa).

Residue glycine 120 to isoleucine 122 participates in (6S)-5,6,7,8-tetrahydrofolate binding. N6-(pyridoxal phosphate)lysine is present on lysine 226.

Belongs to the SHMT family. In terms of assembly, homodimer. Pyridoxal 5'-phosphate serves as cofactor.

The protein resides in the cytoplasm. The protein operates within amino-acid biosynthesis; glycine biosynthesis; glycine from L-serine: step 1/1. In terms of biological role, catalyzes the reversible interconversion of serine and glycine with a modified folate serving as the one-carbon carrier. Also exhibits a pteridine-independent aldolase activity toward beta-hydroxyamino acids, producing glycine and aldehydes, via a retro-aldol mechanism. This chain is Serine hydroxymethyltransferase, found in Pyrobaculum calidifontis (strain DSM 21063 / JCM 11548 / VA1).